The sequence spans 398 residues: RNA exonuclease 3 (398 aa).

The Exonuclease domain maps to 239–385 (VLALDCEMGF…QDAIAAMDII (147 aa)).

The protein belongs to the REXO1/REXO3 family.

The protein localises to the cytoplasm. Its subcellular location is the nucleus. In terms of biological role, 3' to 5' exoribonuclease required for proper 3' end maturation of MRP RNA and of the U5L snRNA. This Candida glabrata (strain ATCC 2001 / BCRC 20586 / JCM 3761 / NBRC 0622 / NRRL Y-65 / CBS 138) (Yeast) protein is RNA exonuclease 3 (REX3).